The chain runs to 566 residues: Proline--tRNA ligase (566 aa).

The protein belongs to the class-II aminoacyl-tRNA synthetase family. ProS type 1 subfamily. Homodimer.

The protein resides in the cytoplasm. It catalyses the reaction tRNA(Pro) + L-proline + ATP = L-prolyl-tRNA(Pro) + AMP + diphosphate. Catalyzes the attachment of proline to tRNA(Pro) in a two-step reaction: proline is first activated by ATP to form Pro-AMP and then transferred to the acceptor end of tRNA(Pro). As ProRS can inadvertently accommodate and process non-cognate amino acids such as alanine and cysteine, to avoid such errors it has two additional distinct editing activities against alanine. One activity is designated as 'pretransfer' editing and involves the tRNA(Pro)-independent hydrolysis of activated Ala-AMP. The other activity is designated 'posttransfer' editing and involves deacylation of mischarged Ala-tRNA(Pro). The misacylated Cys-tRNA(Pro) is not edited by ProRS. This Bacillus mycoides (strain KBAB4) (Bacillus weihenstephanensis) protein is Proline--tRNA ligase.